A 407-amino-acid polypeptide reads, in one-letter code: B3 domain-containing protein Os07g0183200 (407 aa).

The TF-B3 DNA-binding region spans 124-227; the sequence is FVKTLMISDF…ELYVGVRRQR (104 aa).

It is found in the nucleus. The sequence is that of B3 domain-containing protein Os07g0183200 from Oryza sativa subsp. japonica (Rice).